Consider the following 469-residue polypeptide: Glutamate--tRNA ligase (469 aa).

Positions 9–19 (PSPTGFLHVGG) match the 'HIGH' region motif. Positions 98, 100, 125, and 127 each coordinate Zn(2+). The 'KMSKS' region motif lies at 236–240 (KLSKR). Position 239 (Lys239) interacts with ATP.

The protein belongs to the class-I aminoacyl-tRNA synthetase family. Glutamate--tRNA ligase type 1 subfamily. Monomer. Requires Zn(2+) as cofactor.

The protein resides in the cytoplasm. The catalysed reaction is tRNA(Glu) + L-glutamate + ATP = L-glutamyl-tRNA(Glu) + AMP + diphosphate. Functionally, catalyzes the attachment of glutamate to tRNA(Glu) in a two-step reaction: glutamate is first activated by ATP to form Glu-AMP and then transferred to the acceptor end of tRNA(Glu). This Shewanella sp. (strain W3-18-1) protein is Glutamate--tRNA ligase.